We begin with the raw amino-acid sequence, 226 residues long: Ras-related protein RGP1 (226 aa).

25-32 contributes to the GTP binding site; it reads GDSAVGKS. The Effector region signature appears at 47–55; it reads SKATIGVEF. GTP-binding positions include 73 to 77 and 131 to 134; these read DTAGQ and NKSD. 2 S-geranylgeranyl cysteine lipidation sites follow: Cys223 and Cys224.

This sequence belongs to the small GTPase superfamily. Rab family.

It localises to the cell membrane. May play an important role in plant growth and development. This chain is Ras-related protein RGP1 (RGP1), found in Oryza sativa subsp. japonica (Rice).